Reading from the N-terminus, the 179-residue chain is Sodium/potassium-transporting ATPase subunit beta-1-interacting protein 3 (179 aa).

4 consecutive transmembrane segments (helical) span residues 5–22 (TGRCTLVFICTLQMLVAL), 35–55 (APILGNFLHIIVVILGLFGTI), 62–82 (IVAYTIWTAFWVAWNVFIICF), and 151–171 (AVQILLSLIGFVYACYVISVI).

This sequence belongs to the NKAIN family. In terms of assembly, interacts with atp1b1 C-terminus.

The protein localises to the cell membrane. This is Sodium/potassium-transporting ATPase subunit beta-1-interacting protein 3 (nkain3) from Xenopus laevis (African clawed frog).